A 559-amino-acid polypeptide reads, in one-letter code: Pentatricopeptide repeat-containing protein At1g08610 (559 aa).

PPR repeat units follow at residues 103-137, 138-172, 173-207, 208-242, 243-277, 278-312, 313-347, 348-382, 383-417, 418-452, 453-487, 488-522, and 523-557; these read DEET…NQVP, HFPS…GGVP, DTIT…GSPP, DVIT…GCPP, FMIT…GCYP, DIVT…GLEL, NTVT…SYCP, TVIT…KCLP, DIVT…CCPP, GLIT…GIFP, DDIT…GNGI, RGST…GCKP, and DETI…KLLK.

Belongs to the PPR family. P subfamily.

In Arabidopsis thaliana (Mouse-ear cress), this protein is Pentatricopeptide repeat-containing protein At1g08610.